Here is a 984-residue protein sequence, read N- to C-terminus: Probable beta-galactosidase C (984 aa).

Positions 1–23 (MRLLSFIYLVWLALLTGTPQVSA) are cleaved as a signal peptide. Residues tyrosine 82, asparagine 127, alanine 128, glutamate 129, and asparagine 187 each contribute to the substrate site. Glutamate 188 (proton donor) is an active-site residue. An N-linked (GlcNAc...) asparagine glycan is attached at asparagine 197. Position 251 (tyrosine 251) interacts with substrate. A disulfide bond links cysteine 257 and cysteine 304. N-linked (GlcNAc...) asparagine glycosylation occurs at asparagine 276. Glutamate 287 (nucleophile) is an active-site residue. Residue tyrosine 353 participates in substrate binding. N-linked (GlcNAc...) asparagine glycans are attached at residues asparagine 391, asparagine 421, asparagine 434, asparagine 517, asparagine 602, asparagine 677, asparagine 715, asparagine 720, asparagine 759, and asparagine 805.

Belongs to the glycosyl hydrolase 35 family.

It is found in the secreted. The enzyme catalyses Hydrolysis of terminal non-reducing beta-D-galactose residues in beta-D-galactosides.. In terms of biological role, cleaves beta-linked terminal galactosyl residues from gangliosides, glycoproteins, and glycosaminoglycans. This Aspergillus oryzae (strain ATCC 42149 / RIB 40) (Yellow koji mold) protein is Probable beta-galactosidase C (lacC).